The primary structure comprises 487 residues: NADH-quinone oxidoreductase subunit N (487 aa).

13 helical membrane-spanning segments follow: residues 9–29 (PVLP…LGVF), 38–58 (VSVL…SLGG), 73–93 (FAGF…AMSL), 108–128 (VLVL…DFIA), 161–181 (FVLG…LYGF), 208–228 (IIAG…AVPF), 240–260 (PTPV…CLLV), 277–297 (VVTF…VVQT), 306–326 (SSIG…TLGI), 328–348 (GVLI…AVIL), 374–394 (AFVM…AGFW), 408–430 (LYTL…LRIV), and 452–472 (LVMA…APLV).

The protein belongs to the complex I subunit 2 family. In terms of assembly, NDH-1 is composed of 14 different subunits. Subunits NuoA, H, J, K, L, M, N constitute the membrane sector of the complex.

Its subcellular location is the cell inner membrane. The enzyme catalyses a quinone + NADH + 5 H(+)(in) = a quinol + NAD(+) + 4 H(+)(out). NDH-1 shuttles electrons from NADH, via FMN and iron-sulfur (Fe-S) centers, to quinones in the respiratory chain. The immediate electron acceptor for the enzyme in this species is believed to be ubiquinone. Couples the redox reaction to proton translocation (for every two electrons transferred, four hydrogen ions are translocated across the cytoplasmic membrane), and thus conserves the redox energy in a proton gradient. In Paramagnetospirillum magneticum (strain ATCC 700264 / AMB-1) (Magnetospirillum magneticum), this protein is NADH-quinone oxidoreductase subunit N.